Consider the following 529-residue polypeptide: MFLFAMGLLLVILQPSTGQFPRVCANTQSLLRKECCPPWDGDGTPCGERSNRGTCQRILLSQAPLGPQFPFSGVDDREDWPSVFYNRTCRCRGNFMGFNCGECKFGFSGQNCTERRLRTRRNIFQLTISEKDKFLAYLNLAKNIPSKDYVIATGTYAQMNNGSNPMFRNINVYDLFVWMHYYASRDTLLGGSNVWRDIDFAHEAPGFLPWHRAFLLLWEREIQKITGDENFTIPYWDWRDAEDCVICTDEYMGGQHPTNPNLLSPASFFSSWQVICTQSEEYNSQQALCNATSEGPILRNPGNNDKSRTPRLPSSSEVEFCLTLTQYESGSMDKMANYSFRNTLEGFADPHTAISNISQSGLHNALHIYMNGSMSQVQGSANDPIFILHHAFVDSIFERWLRRHRPMLEVYPAANAPIGHNRENYMVPFIPLYRNGEFFISSRELGYDYEYLQEPALGSFQDFLIPYLKQAHQIWPWLVGAAVIGGIITAVLSGLILACRKKRKGTSPEIQPLLTESEDYNNVSYQSHF.

Residues 1-18 (MFLFAMGLLLVILQPSTG) form the signal peptide. At 19-476 (QFPRVCANTQ…YLKQAHQIWP (458 aa)) the chain is on the lumenal, melanosome side. Residues Asn-86, Asn-111, and Asn-161 are each glycosylated (N-linked (GlcNAc...) asparagine). Residues His-180, His-202, and His-211 each contribute to the Cu cation site. 2 N-linked (GlcNAc...) asparagine glycosylation sites follow: Asn-230 and Asn-290. The tract at residues 293 to 313 (SEGPILRNPGNNDKSRTPRLP) is disordered. N-linked (GlcNAc...) asparagine glycosylation is found at Asn-337 and Asn-356. Positions 363 and 367 each coordinate Cu cation. Asn-371 carries an N-linked (GlcNAc...) asparagine glycan. His-390 serves as a coordination point for Cu cation. Residues 477-497 (WLVGAAVIGGIITAVLSGLIL) form a helical membrane-spanning segment. Residues 498–529 (ACRKKRKGTSPEIQPLLTESEDYNNVSYQSHF) are Cytoplasmic-facing.

This sequence belongs to the tyrosinase family. Cu(2+) serves as cofactor.

The protein localises to the melanosome membrane. It is found in the melanosome. It carries out the reaction 2 L-dopa + O2 = 2 L-dopaquinone + 2 H2O. The catalysed reaction is L-tyrosine + O2 = L-dopaquinone + H2O. Functionally, this is a copper-containing oxidase that functions in the formation of pigments such as melanins and other polyphenolic compounds. Catalyzes the initial and rate limiting step in the cascade of reactions leading to melanin production from tyrosine. In addition to hydroxylating tyrosine to DOPA (3,4-dihydroxyphenylalanine), also catalyzes the oxidation of DOPA to DOPA-quinone, and possibly the oxidation of DHI (5,6-dihydroxyindole) to indole-5,6 quinone. This Gallus gallus (Chicken) protein is Tyrosinase (TYR).